We begin with the raw amino-acid sequence, 568 residues long: Small ribosomal subunit protein bS1 (568 aa).

6 S1 motif domains span residues 39 to 100 (KTVV…LSRE), 118 to 184 (GEFV…VSRR), 205 to 273 (GMVL…LGIK), 290 to 360 (GKQM…LSIK), 377 to 447 (GTII…LGIK), and 464 to 533 (GTIV…LSVK).

Belongs to the bacterial ribosomal protein bS1 family.

In terms of biological role, binds mRNA; thus facilitating recognition of the initiation point. It is needed to translate mRNA with a short Shine-Dalgarno (SD) purine-rich sequence. This chain is Small ribosomal subunit protein bS1 (rpsA), found in Rickettsia conorii (strain ATCC VR-613 / Malish 7).